The primary structure comprises 483 residues: MTTLAVLSVASELFPLIKTGGLADVAGALPAALRANDVAVTSLLPGYPAVLGGIEDPQQVHSFNELFGGTARLLAARCGDLDLFVLDAPHLYVRPGNPYVGPDGKDWPDNGLRFAALAQVGAALGQGLLPHYKPDVLHAHDWQTGLLPAYLKYSGRPGPKTVFTIHNLAFQGRFPYELLGRLGLPERAFGLDGIEYYGGIGYLKAGLQLADRITTVSPSYAAEIQGSEAGMGLDGLLQLRADRLSGILNGIDTDVWNPASDALISATYDVESIAARARNKKVLQARFGLKPEPGALLYGVISRLSWQKGLDLLLQALPQLIGGGAQLALLGSGDAELEQGYAAAARKYPGQVGAVIGYDEALAHQIQAGADALLVPSRFEPCGLTQLCALRYGAVPVVARVGGLADTVVDANEMATATGVATGVQFAPVTTDALIKAFGKTRALFADVVAWRNLQINGMTTDVSWKNPAQHYAKLYRDLVAER.

K18 serves as a coordination point for ADP-alpha-D-glucose.

It belongs to the glycosyltransferase 1 family. Bacterial/plant glycogen synthase subfamily.

The enzyme catalyses [(1-&gt;4)-alpha-D-glucosyl](n) + ADP-alpha-D-glucose = [(1-&gt;4)-alpha-D-glucosyl](n+1) + ADP + H(+). Its pathway is glycan biosynthesis; glycogen biosynthesis. In terms of biological role, synthesizes alpha-1,4-glucan chains using ADP-glucose. In Rhodopseudomonas palustris (strain TIE-1), this protein is Glycogen synthase.